We begin with the raw amino-acid sequence, 158 residues long: UPF0262 protein R00612 (158 aa).

It belongs to the UPF0262 family.

This chain is UPF0262 protein R00612, found in Rhizobium meliloti (strain 1021) (Ensifer meliloti).